A 466-amino-acid chain; its full sequence is Alpha-1A adrenergic receptor (466 aa).

Over M1 to K25 the chain is Extracellular. 3 N-linked (GlcNAc...) asparagine glycosylation sites follow: N7, N13, and N22. The helical transmembrane segment at A26–V51 threads the bilayer. At A52–Y63 the chain is on the cytoplasmic side. Residues Y64 to L89 traverse the membrane as a helical segment. The Extracellular portion of the chain corresponds to G90–C99. A helical membrane pass occupies residues N100–I122. The Cytoplasmic segment spans residues D123–G143. The chain crosses the membrane as a helical span at residues L144–P168. At A169–E181 the chain is on the extracellular side. The chain crosses the membrane as a helical span at residues P182 to C205. At R206–K272 the chain is on the cytoplasmic side. Residues T273–F297 traverse the membrane as a helical segment. At F298–P304 the chain is on the extracellular side. Residues E305–S329 traverse the membrane as a helical segment. Over S330–V466 the chain is Cytoplasmic. The short motif at K334–K349 is the Nuclear localization signal element. Residue C345 is the site of S-palmitoyl cysteine attachment.

This sequence belongs to the G-protein coupled receptor 1 family. Adrenergic receptor subfamily. ADRA1A sub-subfamily. In terms of assembly, homo- and heterooligomer. Heterooligomerizes with ADRA1B homooligomers in cardiac myocytes. Interacts with CAVIN4. As to expression, abundant in liver, vas deferens, brain, and aorta, but not in heart.

It localises to the nucleus membrane. The protein resides in the cell membrane. It is found in the cytoplasm. Its subcellular location is the membrane. The protein localises to the caveola. In terms of biological role, this alpha-adrenergic receptor mediates its action by association with G proteins that activate a phosphatidylinositol-calcium second messenger system. Its effect is mediated by G(q) and G(11) proteins. Nuclear ADRA1A-ADRA1B heterooligomers regulate phenylephrine (PE)-stimulated ERK signaling in cardiac myocytes. The chain is Alpha-1A adrenergic receptor (ADRA1A) from Oryctolagus cuniculus (Rabbit).